The primary structure comprises 220 residues: Thiopurine S-methyltransferase (220 aa).

The S-adenosyl-L-methionine site is built by Trp-10, Leu-45, Glu-66, and Arg-123.

It belongs to the class I-like SAM-binding methyltransferase superfamily. TPMT family.

It localises to the cytoplasm. It carries out the reaction S-adenosyl-L-methionine + a thiopurine = S-adenosyl-L-homocysteine + a thiopurine S-methylether.. The sequence is that of Thiopurine S-methyltransferase from Nitrosospira multiformis (strain ATCC 25196 / NCIMB 11849 / C 71).